The following is a 459-amino-acid chain: Bifunctional protein GlmU (459 aa).

Residues 1–229 (MSNFAIILAA…FDESLGVNDR (229 aa)) are pyrophosphorylase. UDP-N-acetyl-alpha-D-glucosamine contacts are provided by residues 8–11 (LAAG), Lys-22, Gln-72, and 77–78 (GT). Residue Asp-102 coordinates Mg(2+). UDP-N-acetyl-alpha-D-glucosamine is bound by residues Gly-139, Glu-154, Asn-169, and Asn-227. Asn-227 contributes to the Mg(2+) binding site. Residues 230–250 (VALATAESVMRRRINHKHMVN) form a linker region. Residues 251–459 (GVSFVNPEAT…TRLPHHPKNQ (209 aa)) form an N-acetyltransferase region. Positions 332 and 350 each coordinate UDP-N-acetyl-alpha-D-glucosamine. Residue His-362 is the Proton acceptor of the active site. UDP-N-acetyl-alpha-D-glucosamine-binding residues include Tyr-365 and Asn-376. Acetyl-CoA is bound by residues Ala-379, 385-386 (NY), Ser-404, Ala-422, and Arg-439.

It in the N-terminal section; belongs to the N-acetylglucosamine-1-phosphate uridyltransferase family. The protein in the C-terminal section; belongs to the transferase hexapeptide repeat family. As to quaternary structure, homotrimer. It depends on Mg(2+) as a cofactor.

It is found in the cytoplasm. The enzyme catalyses alpha-D-glucosamine 1-phosphate + acetyl-CoA = N-acetyl-alpha-D-glucosamine 1-phosphate + CoA + H(+). It carries out the reaction N-acetyl-alpha-D-glucosamine 1-phosphate + UTP + H(+) = UDP-N-acetyl-alpha-D-glucosamine + diphosphate. The protein operates within nucleotide-sugar biosynthesis; UDP-N-acetyl-alpha-D-glucosamine biosynthesis; N-acetyl-alpha-D-glucosamine 1-phosphate from alpha-D-glucosamine 6-phosphate (route II): step 2/2. It participates in nucleotide-sugar biosynthesis; UDP-N-acetyl-alpha-D-glucosamine biosynthesis; UDP-N-acetyl-alpha-D-glucosamine from N-acetyl-alpha-D-glucosamine 1-phosphate: step 1/1. It functions in the pathway bacterial outer membrane biogenesis; LPS lipid A biosynthesis. Catalyzes the last two sequential reactions in the de novo biosynthetic pathway for UDP-N-acetylglucosamine (UDP-GlcNAc). The C-terminal domain catalyzes the transfer of acetyl group from acetyl coenzyme A to glucosamine-1-phosphate (GlcN-1-P) to produce N-acetylglucosamine-1-phosphate (GlcNAc-1-P), which is converted into UDP-GlcNAc by the transfer of uridine 5-monophosphate (from uridine 5-triphosphate), a reaction catalyzed by the N-terminal domain. The sequence is that of Bifunctional protein GlmU from Streptococcus pneumoniae (strain JJA).